A 132-amino-acid polypeptide reads, in one-letter code: Holo-[acyl-carrier-protein] synthase (132 aa).

2 residues coordinate Mg(2+): aspartate 8 and glutamate 62.

The protein belongs to the P-Pant transferase superfamily. AcpS family. Mg(2+) serves as cofactor.

It localises to the cytoplasm. It catalyses the reaction apo-[ACP] + CoA = holo-[ACP] + adenosine 3',5'-bisphosphate + H(+). Transfers the 4'-phosphopantetheine moiety from coenzyme A to a Ser of acyl-carrier-protein. The polypeptide is Holo-[acyl-carrier-protein] synthase (Leptothrix cholodnii (strain ATCC 51168 / LMG 8142 / SP-6) (Leptothrix discophora (strain SP-6))).